A 1203-amino-acid polypeptide reads, in one-letter code: DNA-directed RNA polymerase subunit beta' (1203 aa).

Cysteine 60, cysteine 62, cysteine 75, and cysteine 78 together coordinate Zn(2+). Mg(2+) contacts are provided by aspartate 449, aspartate 451, and aspartate 453. Zn(2+)-binding residues include cysteine 818, cysteine 892, cysteine 899, and cysteine 902.

It belongs to the RNA polymerase beta' chain family. The RNAP catalytic core consists of 2 alpha, 1 beta, 1 beta' and 1 omega subunit. When a sigma factor is associated with the core the holoenzyme is formed, which can initiate transcription. It depends on Mg(2+) as a cofactor. The cofactor is Zn(2+).

It carries out the reaction RNA(n) + a ribonucleoside 5'-triphosphate = RNA(n+1) + diphosphate. DNA-dependent RNA polymerase catalyzes the transcription of DNA into RNA using the four ribonucleoside triphosphates as substrates. This Bacillus thuringiensis (strain Al Hakam) protein is DNA-directed RNA polymerase subunit beta'.